A 498-amino-acid chain; its full sequence is MTDLIKLDAATLAAKIAAREVSATEVTQACLDQIAATDAEYHAFLHVAGDQALAAAATVDKAIHEATAAGERLPSPLAGVPLALKDVFTTTDMPTTCGSKILEGWTSPYDATVTAKLRAAGIPILGKTNMDEFAMGSSTENSAYGPTRNPWNVDCVPGGSGGGSAAALAAFQAPLAIGSDTGGSIRQPAALTATVGVKPTYGTVSRYGLIACASSLDQGGPCARTVLDTALLHQVIAGHDPRDSTSVNAAVPDVVGAARAGARGDLKGVRIGVVKQLRSGEGYQPGVLASFTAAVEQLTALGAEVSEVDCPHFDHSLAAYYLILPSEVSSNLAKFDGMRYGLRVGDDGTTSAEEVMAMTRAAGFGAEVKRRIMIGTYALSAGYYDAYYNQAQKVRTLIARDLDEAYRSVDVLVSPATPSTAFRLGEKVDDPLAMYLFDLCTLPLNLAGHCGMSVPSGLSADDNLPVGLQIMAPALADDRLYRVGAAYEAARGPLPTAL.

Catalysis depends on charge relay system residues Lys85 and Ser160. Catalysis depends on Ser184, which acts as the Acyl-ester intermediate.

The protein belongs to the amidase family. GatA subfamily. As to quaternary structure, heterotrimer of A, B and C subunits.

The catalysed reaction is L-glutamyl-tRNA(Gln) + L-glutamine + ATP + H2O = L-glutaminyl-tRNA(Gln) + L-glutamate + ADP + phosphate + H(+). Functionally, allows the formation of correctly charged Gln-tRNA(Gln) through the transamidation of misacylated Glu-tRNA(Gln) in organisms which lack glutaminyl-tRNA synthetase. The reaction takes place in the presence of glutamine and ATP through an activated gamma-phospho-Glu-tRNA(Gln). This Mycolicibacterium vanbaalenii (strain DSM 7251 / JCM 13017 / BCRC 16820 / KCTC 9966 / NRRL B-24157 / PYR-1) (Mycobacterium vanbaalenii) protein is Glutamyl-tRNA(Gln) amidotransferase subunit A.